The sequence spans 421 residues: Na(+)/H(+) antiporter NhaA 1 (421 aa).

A run of 11 helical transmembrane segments spans residues 48-68 (SSGLVLILAAVLAFAWANSPW), 93-113 (LYWWVNDLLMALFFLLVGLEI), 129-149 (SLALFAALGGMLLPAGLYTLV), 157-177 (AGWGVPMATDIAFALGVLALL), 187-207 (VLLAALAILDDLGAVLVIALF), 215-235 (LALGLMGAVWALGLGLNAAGV), 253-273 (LASGLHPTVAGVLLALTIPLG), 299-319 (FLILPLFALFNAGVSVAGGSL), 326-346 (VVLGLIIGKPLGVVAFAWLAV), 364-384 (GLGLLAGIGFTMALFIGGLAF), and 392-412 (AAKLGILTASVLAALAAITVL).

The protein belongs to the NhaA Na(+)/H(+) (TC 2.A.33) antiporter family.

The protein resides in the cell membrane. It catalyses the reaction Na(+)(in) + 2 H(+)(out) = Na(+)(out) + 2 H(+)(in). Functionally, na(+)/H(+) antiporter that extrudes sodium in exchange for external protons. The protein is Na(+)/H(+) antiporter NhaA 1 of Deinococcus geothermalis (strain DSM 11300 / CIP 105573 / AG-3a).